The chain runs to 220 residues: Iron-sulfur cluster repair protein YtfE (220 aa).

This sequence belongs to the RIC family. YtfE subfamily. Homodimer.

It localises to the cytoplasm. Functionally, di-iron-containing protein involved in the repair of iron-sulfur clusters damaged by oxidative and nitrosative stress conditions. This Enterobacter sp. (strain 638) protein is Iron-sulfur cluster repair protein YtfE.